A 78-amino-acid chain; its full sequence is Small ribosomal subunit protein bS18 (78 aa).

This sequence belongs to the bacterial ribosomal protein bS18 family. As to quaternary structure, part of the 30S ribosomal subunit. Forms a tight heterodimer with protein bS6.

Its function is as follows. Binds as a heterodimer with protein bS6 to the central domain of the 16S rRNA, where it helps stabilize the platform of the 30S subunit. This chain is Small ribosomal subunit protein bS18, found in Thermobifida fusca (strain YX).